Consider the following 453-residue polypeptide: Ribosome biogenesis protein YTM1 (453 aa).

Residues 8–89 (VKLRFFTREQ…ETFLNVEYTR (82 aa)) form a ubiquitin-like (UBL) domain region. Positions 99 to 453 (SFSNEDWVSS…INKGDNIFKS (355 aa)) are sufficient for interaction with ERB1 and association with 66S pre-ribosomes. WD repeat units lie at residues 101-139 (SNEDWVSSLDVGDNNKIISGSYDGVVRTWNLSGKIEKQY), 141-179 (GHSAPIRAVKYISNTRMVSGGNDRTLRLWKTKNEDLKQP), 199-237 (GHKAPVVSIDVSDNSRILSGSYDNTIGFWSTIYKEMTVV), 278-318 (SHTG…CIDT), 320-359 (TTSYSLLSLAQLPTLNLLACGSSARHITLHDPRIGSTSKI), 366-406 (GHKN…PMYT), and 417-453 (GVNDKVFAVNWSKNVGIISAGQDKKIQINKGDNIFKS).

Belongs to the WD repeat WDR12/YTM1 family. As to quaternary structure, component of the NOP7 complex, composed of ERB1, NOP7 and YTM1. The complex is held together by ERB1, which interacts with NOP7 via its N-terminal domain and with YTM1 via a high-affinity interaction between the seven-bladed beta-propeller domains of the 2 proteins. The NOP7 complex associates with the 66S pre-ribosome. Interacts (via UBL domain) with MDN1 (via VWFA/MIDAS domain).

The protein localises to the nucleus. It localises to the nucleolus. It is found in the nucleoplasm. Functionally, component of the NOP7 complex, which is required for maturation of the 25S and 5.8S ribosomal RNAs and formation of the 60S ribosome. In Vanderwaltozyma polyspora (strain ATCC 22028 / DSM 70294 / BCRC 21397 / CBS 2163 / NBRC 10782 / NRRL Y-8283 / UCD 57-17) (Kluyveromyces polysporus), this protein is Ribosome biogenesis protein YTM1.